A 285-amino-acid polypeptide reads, in one-letter code: HTH-type transcriptional regulator MurR (285 aa).

The HTH rpiR-type domain maps to 1 to 77; it reads MLYLTKISNA…MALIGEYSAS (77 aa). A DNA-binding region (H-T-H motif) is located at residues 37–56; that stretch reads SRQMAKQLGISQSSIVKFAQ. The SIS domain maps to 128–279; that stretch reads IIEVISKAPF…SLKMIQRSSE (152 aa).

As to quaternary structure, homotetramer.

Its pathway is amino-sugar metabolism; N-acetylmuramate degradation [regulation]. Represses the expression of the murPQ operon involved in the uptake and degradation of N-acetylmuramic acid (MurNAc). Binds to two adjacent inverted repeats within the operator region. MurNAc 6-phosphate, the substrate of MurQ, is the specific inducer that weakens binding of MurR to the operator. The sequence is that of HTH-type transcriptional regulator MurR from Shigella boydii serotype 4 (strain Sb227).